The primary structure comprises 299 residues: Oxygen-dependent coproporphyrinogen-III oxidase (299 aa).

Ser-92 serves as a coordination point for substrate. A divalent metal cation is bound by residues His-96 and His-106. His-106 serves as the catalytic Proton donor. Position 108-110 (108-110) interacts with substrate; that stretch reads NVR. A divalent metal cation is bound by residues His-145 and His-175. Positions 239 to 274 are important for dimerization; sequence YVEFNLVYDRGTLFGLQSGGRAESILMSLPPRVRWE. Residue 257-259 participates in substrate binding; sequence GGR.

Belongs to the aerobic coproporphyrinogen-III oxidase family. As to quaternary structure, homodimer. A divalent metal cation serves as cofactor.

It is found in the cytoplasm. It carries out the reaction coproporphyrinogen III + O2 + 2 H(+) = protoporphyrinogen IX + 2 CO2 + 2 H2O. It participates in porphyrin-containing compound metabolism; protoporphyrin-IX biosynthesis; protoporphyrinogen-IX from coproporphyrinogen-III (O2 route): step 1/1. Its function is as follows. Involved in the heme biosynthesis. Catalyzes the aerobic oxidative decarboxylation of propionate groups of rings A and B of coproporphyrinogen-III to yield the vinyl groups in protoporphyrinogen-IX. The sequence is that of Oxygen-dependent coproporphyrinogen-III oxidase from Xanthomonas axonopodis pv. citri (strain 306).